A 304-amino-acid chain; its full sequence is Quinolinate synthase (304 aa).

His-24 and Ser-41 together coordinate iminosuccinate. Residue Cys-86 coordinates [4Fe-4S] cluster. Residues Tyr-112–Asn-114 and Ser-129 contribute to the iminosuccinate site. Cys-171 serves as a coordination point for [4Fe-4S] cluster. Residues His-197 to Glu-199 and Thr-214 contribute to the iminosuccinate site. A [4Fe-4S] cluster-binding site is contributed by Cys-259.

This sequence belongs to the quinolinate synthase family. Type 2 subfamily. The cofactor is [4Fe-4S] cluster.

It localises to the cytoplasm. The catalysed reaction is iminosuccinate + dihydroxyacetone phosphate = quinolinate + phosphate + 2 H2O + H(+). Its pathway is cofactor biosynthesis; NAD(+) biosynthesis; quinolinate from iminoaspartate: step 1/1. Its function is as follows. Catalyzes the condensation of iminoaspartate with dihydroxyacetone phosphate to form quinolinate. This chain is Quinolinate synthase, found in Methanosarcina barkeri (strain Fusaro / DSM 804).